The chain runs to 734 residues: 1,4-alpha-glucan branching enzyme GlgB (734 aa).

Asp414 acts as the Nucleophile in catalysis. Residue Glu467 is the Proton donor of the active site.

Belongs to the glycosyl hydrolase 13 family. GlgB subfamily. Monomer.

It catalyses the reaction Transfers a segment of a (1-&gt;4)-alpha-D-glucan chain to a primary hydroxy group in a similar glucan chain.. The protein operates within glycan biosynthesis; glycogen biosynthesis. Functionally, catalyzes the formation of the alpha-1,6-glucosidic linkages in glycogen by scission of a 1,4-alpha-linked oligosaccharide from growing alpha-1,4-glucan chains and the subsequent attachment of the oligosaccharide to the alpha-1,6 position. This chain is 1,4-alpha-glucan branching enzyme GlgB, found in Myxococcus xanthus (strain DK1622).